We begin with the raw amino-acid sequence, 75 residues long: Beta-defensin 42 (75 aa).

The first 21 residues, 1 to 21, serve as a signal peptide directing secretion; sequence MNLRLSCLLFILVTSLPAGRC. Cystine bridges form between cysteine 33–cysteine 60, cysteine 40–cysteine 54, and cysteine 44–cysteine 61.

The protein belongs to the beta-defensin family. As to expression, epididymis-specific, with highest levels in the initial segment and distal caput.

The protein localises to the secreted. Functionally, has bactericidal activity. May play a role in the antimicrobial protection of sperm and urogenital tract epithelia. This chain is Beta-defensin 42, found in Mus musculus (Mouse).